We begin with the raw amino-acid sequence, 172 residues long: Translation initiation factor IF-3 (172 aa).

Belongs to the IF-3 family. As to quaternary structure, monomer.

Its subcellular location is the cytoplasm. Functionally, IF-3 binds to the 30S ribosomal subunit and shifts the equilibrium between 70S ribosomes and their 50S and 30S subunits in favor of the free subunits, thus enhancing the availability of 30S subunits on which protein synthesis initiation begins. This chain is Translation initiation factor IF-3, found in Campylobacter fetus subsp. fetus (strain 82-40).